The primary structure comprises 357 residues: Dynein axonemal assembly factor 10 (357 aa).

WD repeat units lie at residues 63-105, 115-154, 162-205, 207-249, 257-297, and 319-357; these read EKAK…MPVY, NAID…DPVA, ENKR…LRWE, NIKN…PTKG, AHKS…QRSK, and LSTQ…LNKI.

Component of the PAQosome complex which is responsible for the biogenesis of several protein complexes and which consists of R2TP complex members RUVBL1, RUVBL2, RPAP3 and PIH1D1, URI complex members PFDN2, PFDN6, PDRG1, UXT and URI1 as well as ASDURF, POLR2E and DNAAF10/WDR92. Interacts with PIH1D1; the interaction associates DNAAF10 with the R2TP complex. Interacts with several dynein axonemal assembly factors. Widely expressed with the highest expression in testis.

Its subcellular location is the dynein axonemal particle. Functionally, key assembly factor specifically required for the stability of axonemal dynein heavy chains in cytoplasm. This Homo sapiens (Human) protein is Dynein axonemal assembly factor 10.